Consider the following 260-residue polypeptide: Thiazole synthase (260 aa).

The active-site Schiff-base intermediate with DXP is K102. 1-deoxy-D-xylulose 5-phosphate is bound by residues G163, 189 to 190, and 211 to 212; these read AG and NT.

This sequence belongs to the ThiG family. As to quaternary structure, homotetramer. Forms heterodimers with either ThiH or ThiS.

It localises to the cytoplasm. It carries out the reaction [ThiS sulfur-carrier protein]-C-terminal-Gly-aminoethanethioate + 2-iminoacetate + 1-deoxy-D-xylulose 5-phosphate = [ThiS sulfur-carrier protein]-C-terminal Gly-Gly + 2-[(2R,5Z)-2-carboxy-4-methylthiazol-5(2H)-ylidene]ethyl phosphate + 2 H2O + H(+). It functions in the pathway cofactor biosynthesis; thiamine diphosphate biosynthesis. In terms of biological role, catalyzes the rearrangement of 1-deoxy-D-xylulose 5-phosphate (DXP) to produce the thiazole phosphate moiety of thiamine. Sulfur is provided by the thiocarboxylate moiety of the carrier protein ThiS. In vitro, sulfur can be provided by H(2)S. In Geobacter metallireducens (strain ATCC 53774 / DSM 7210 / GS-15), this protein is Thiazole synthase.